The chain runs to 135 residues: Methylglyoxal synthase (135 aa).

In terms of domain architecture, MGS-like spans 1 to 135 (MQKTLALVAH…GLYERAVPEF (135 aa)). Substrate contacts are provided by residues His10, Lys14, 36-39 (TGTT), and 56-57 (SG). Asp62 serves as the catalytic Proton donor/acceptor. His89 is a binding site for substrate.

The protein belongs to the methylglyoxal synthase family.

It carries out the reaction dihydroxyacetone phosphate = methylglyoxal + phosphate. Its function is as follows. Catalyzes the formation of methylglyoxal from dihydroxyacetone phosphate. The sequence is that of Methylglyoxal synthase from Pseudoalteromonas atlantica (strain T6c / ATCC BAA-1087).